Reading from the N-terminus, the 120-residue chain is Large ribosomal subunit protein bL17 (120 aa).

It belongs to the bacterial ribosomal protein bL17 family. In terms of assembly, part of the 50S ribosomal subunit. Contacts protein L32.

This Geobacillus sp. (strain WCH70) protein is Large ribosomal subunit protein bL17.